The following is a 787-amino-acid chain: Pyridoxal-dependent decarboxylase domain-containing protein 1 (787 aa).

The segment covering 26-44 (MLEKSPRRTEEENGKKPVS) has biased composition (basic and acidic residues). A disordered region spans residues 26–52 (MLEKSPRRTEEENGKKPVSEDIPGPLQ). Serine 652 is subject to Phosphoserine. The disordered stretch occupies residues 682–787 (QGTGVTPPPT…SQVEELERLR (106 aa)). Phosphothreonine is present on residues threonine 687 and threonine 691. Residues serine 710, serine 718, serine 722, and serine 748 each carry the phosphoserine modification. Residues 725-748 (HIEDLEKVEQLSSGLEHDNLEAHS) are compositionally biased toward basic and acidic residues. Over residues 759-771 (TARQTEALQNQAQ) the composition is skewed to polar residues. Basic and acidic residues predominate over residues 772–787 (HQEDDHSQVEELERLR). Residue serine 778 is modified to Phosphoserine.

It belongs to the group II decarboxylase family. Requires pyridoxal 5'-phosphate as cofactor.

The polypeptide is Pyridoxal-dependent decarboxylase domain-containing protein 1 (Pdxdc1) (Mus musculus (Mouse)).